The chain runs to 99 residues: MRATVGLVEAIGIRELRQHASRYLARVEAGEELGVTNKGRLVARLIPVQAAERSREALIESGVLIPARRPQNLLDVTAEPARGRKRTLSDVLNEMRDEQ.

This sequence belongs to the phD/YefM antitoxin family.

Its function is as follows. Antitoxin component of a type II toxin-antitoxin (TA) system. This is Antitoxin VapB47 (vapB47) from Mycobacterium tuberculosis (strain CDC 1551 / Oshkosh).